We begin with the raw amino-acid sequence, 124 residues long: Small ribosomal subunit protein uS13 (124 aa).

The disordered stretch occupies residues 97–124 (PVRGQRTKTNARTRKGPKRTIAGKKKAR).

Belongs to the universal ribosomal protein uS13 family. Part of the 30S ribosomal subunit. Forms a loose heterodimer with protein S19. Forms two bridges to the 50S subunit in the 70S ribosome.

In terms of biological role, located at the top of the head of the 30S subunit, it contacts several helices of the 16S rRNA. In the 70S ribosome it contacts the 23S rRNA (bridge B1a) and protein L5 of the 50S subunit (bridge B1b), connecting the 2 subunits; these bridges are implicated in subunit movement. Contacts the tRNAs in the A and P-sites. This is Small ribosomal subunit protein uS13 from Mycolicibacterium gilvum (strain PYR-GCK) (Mycobacterium gilvum (strain PYR-GCK)).